The following is a 36-amino-acid chain: VFGTLGSTDDSLFGRYKQDIFNDHRGHLQGQAYGSR.

It is found in the secreted. In terms of biological role, antibacterial protein. This chain is Gloverin, found in Heliothis virescens (Tobacco budworm moth).